Here is a 197-residue protein sequence, read N- to C-terminus: Peptidyl-tRNA hydrolase (197 aa).

Tyr17 is a binding site for tRNA. The active-site Proton acceptor is His22. Phe68, Asn70, and Asn116 together coordinate tRNA.

It belongs to the PTH family. In terms of assembly, monomer.

The protein resides in the cytoplasm. The catalysed reaction is an N-acyl-L-alpha-aminoacyl-tRNA + H2O = an N-acyl-L-amino acid + a tRNA + H(+). Functionally, hydrolyzes ribosome-free peptidyl-tRNAs (with 1 or more amino acids incorporated), which drop off the ribosome during protein synthesis, or as a result of ribosome stalling. Its function is as follows. Catalyzes the release of premature peptidyl moieties from peptidyl-tRNA molecules trapped in stalled 50S ribosomal subunits, and thus maintains levels of free tRNAs and 50S ribosomes. The polypeptide is Peptidyl-tRNA hydrolase (Yersinia enterocolitica serotype O:8 / biotype 1B (strain NCTC 13174 / 8081)).